A 362-amino-acid chain; its full sequence is Phosphoserine aminotransferase (362 aa).

The L-glutamate site is built by S9 and R42. Pyridoxal 5'-phosphate is bound by residues 76 to 77 (GR), W102, T153, D174, and Q197. The residue at position 198 (K198) is an N6-(pyridoxal phosphate)lysine. 239-240 (NT) provides a ligand contact to pyridoxal 5'-phosphate.

The protein belongs to the class-V pyridoxal-phosphate-dependent aminotransferase family. SerC subfamily. As to quaternary structure, homodimer. Pyridoxal 5'-phosphate serves as cofactor.

It is found in the cytoplasm. It carries out the reaction O-phospho-L-serine + 2-oxoglutarate = 3-phosphooxypyruvate + L-glutamate. It catalyses the reaction 4-(phosphooxy)-L-threonine + 2-oxoglutarate = (R)-3-hydroxy-2-oxo-4-phosphooxybutanoate + L-glutamate. It functions in the pathway amino-acid biosynthesis; L-serine biosynthesis; L-serine from 3-phospho-D-glycerate: step 2/3. The protein operates within cofactor biosynthesis; pyridoxine 5'-phosphate biosynthesis; pyridoxine 5'-phosphate from D-erythrose 4-phosphate: step 3/5. Its function is as follows. Catalyzes the reversible conversion of 3-phosphohydroxypyruvate to phosphoserine and of 3-hydroxy-2-oxo-4-phosphonooxybutanoate to phosphohydroxythreonine. The polypeptide is Phosphoserine aminotransferase (Salmonella agona (strain SL483)).